A 215-amino-acid chain; its full sequence is N-(5'-phosphoribosyl)anthranilate isomerase (215 aa).

It belongs to the TrpF family.

The catalysed reaction is N-(5-phospho-beta-D-ribosyl)anthranilate = 1-(2-carboxyphenylamino)-1-deoxy-D-ribulose 5-phosphate. Its pathway is amino-acid biosynthesis; L-tryptophan biosynthesis; L-tryptophan from chorismate: step 3/5. This is N-(5'-phosphoribosyl)anthranilate isomerase from Paramagnetospirillum magneticum (strain ATCC 700264 / AMB-1) (Magnetospirillum magneticum).